The following is a 743-amino-acid chain: Dolichyl-phosphooligosaccharide-protein glycotransferase 2 (743 aa).

Residues 1 to 7 (MKIDKRL) lie on the Cytoplasmic side of the membrane. Residues 8–28 (MVIVAIATLFRMIPFRLKYLV) traverse the membrane as a helical segment. Residues 29 to 31 (GSD) carry the DXD motif 1 motif. Topologically, residues 29–91 (GSDPYFHLAY…FSFLGISLYT (63 aa)) are extracellular. Position 31 (aspartate 31) interacts with Mn(2+). Residues 92–112 (AFRVTPVIFGVLTVVFFYLSL) traverse the membrane as a helical segment. Residues 113–119 (KKLYNRD) are Cytoplasmic-facing. A helical membrane pass occupies residues 120 to 140 (VAFIVGLFLGVNYGHIFRSMA). Topologically, residues 141-144 (NYYR) are extracellular. Arginine 144 and aspartate 146 together coordinate Mn(2+). A DXD motif 2 motif is present at residues 144 to 146 (RGD). The chain crosses the membrane as a helical span at residues 145 to 165 (GDNYMLFWYSVALLGIALGLK). Over 166 to 170 (TRSKY) the chain is Cytoplasmic. 2 consecutive transmembrane segments (helical) span residues 171-191 (RYLF…FWQA) and 192-212 (YYPI…YAYL). Over 213 to 216 (KSPK) the chain is Cytoplasmic. Residues 217–237 (LFLDSILIVLSTGLGVLIANI) form a helical membrane-spanning segment. Topologically, residues 238–272 (LGDKVGYGMLGYTDWMGKKVAETFGLEFGFIKDAY) are extracellular. The chain crosses the membrane as a helical span at residues 273–293 (LLIHVKYLLPLSLVFLGFLII). Residues 294 to 302 (TKKLNPKIK) lie on the Cytoplasmic side of the membrane. Residues 303–323 (VGVLVGGSILAFIVMLVKFPA) form a helical membrane-spanning segment. Topologically, residues 324–345 (LKDLSTGFGTFREVPISETLPP) are extracellular. The TIXE motif motif lies at 333–336 (TFRE). Residues 346-366 (TLDDLWRAYNIAIFLAALYIL) traverse the membrane as a helical segment. At 367 to 373 (RLRKIRS) the chain is on the cytoplasmic side. Residues 374–391 (GDAILLGYVITSLWMLRY) form a helical membrane-spanning segment. Over 392–394 (WTR) the chain is Extracellular. A glycophospholipid is bound at residue arginine 394. A helical membrane pass occupies residues 395 to 415 (FLFTAAPAVAFLSGIGVYELT). The Cytoplasmic segment spans residues 416–424 (RRIKENKIR). Residues 425-445 (ITSLGVVILLSSAFSLGEVYS) form a helical membrane-spanning segment. Over 446-743 (VKPFMNENWE…LDRGIVRVKN (298 aa)) the chain is Extracellular. Positions 474 to 476 (WWD) are interacts with target acceptor peptide in protein substrate. Positions 474 to 478 (WWDWG) match the WWDYG motif motif. The DK motif signature appears at 526–533 (DILKFEAI).

This sequence belongs to the STT3 family. It depends on Mn(2+) as a cofactor. Mg(2+) serves as cofactor.

The protein resides in the cell membrane. The enzyme catalyses an archaeal dolichyl phosphooligosaccharide + [protein]-L-asparagine = an archaeal dolichyl phosphate + a glycoprotein with the oligosaccharide chain attached by N-beta-D-glycosyl linkage to a protein L-asparagine.. It participates in protein modification; protein glycosylation. Its function is as follows. Oligosaccharyl transferase (OST) that catalyzes the initial transfer of a defined glycan (ManNAcXyl(2)GlcAMan(2)GalNAc in P.furiosus) from the lipid carrier dolichol-monophosphate to an asparagine residue within an Asn-X-Ser/Thr consensus motif in nascent polypeptide chains, the first step in protein N-glycosylation. This is Dolichyl-phosphooligosaccharide-protein glycotransferase 2 (aglB2) from Pyrococcus furiosus (strain ATCC 43587 / DSM 3638 / JCM 8422 / Vc1).